We begin with the raw amino-acid sequence, 371 residues long: Outer membrane protein P2 (371 aa).

The N-terminal stretch at 1-20 is a signal peptide; the sequence is MKKTLAALIVGAFAASAANA.

Belongs to the Gram-negative porin family. Homotrimer.

The protein resides in the cell outer membrane. In terms of biological role, forms pores that allow passive diffusion of small molecules across the outer membrane. The protein is Outer membrane protein P2 (ompP2) of Haemophilus influenzae.